Consider the following 89-residue polypeptide: MALDQAKKAEIIAKYARGENDTGSTEVQVALLTERIKYLTDHLKTNKKDHSSRLGLLKLVGQRRRLMRYLKNTDLERWHTIKDALGIRN.

This sequence belongs to the universal ribosomal protein uS15 family. As to quaternary structure, part of the 30S ribosomal subunit. Forms a bridge to the 50S subunit in the 70S ribosome, contacting the 23S rRNA.

One of the primary rRNA binding proteins, it binds directly to 16S rRNA where it helps nucleate assembly of the platform of the 30S subunit by binding and bridging several RNA helices of the 16S rRNA. Functionally, forms an intersubunit bridge (bridge B4) with the 23S rRNA of the 50S subunit in the ribosome. This chain is Small ribosomal subunit protein uS15, found in Sulfurovum sp. (strain NBC37-1).